A 239-amino-acid polypeptide reads, in one-letter code: Putative ABC transporter ATP-binding protein BR1368/BS1330_I1363 (239 aa).

The 230-residue stretch at 5 to 234 folds into the ABC transporter domain; it reads LSLDRVSVSR…EQVHLHYVEA (230 aa). 37–44 provides a ligand contact to ATP; sequence GDNGVGKT.

Belongs to the ABC transporter superfamily.

It is found in the cell inner membrane. Functionally, probably part of an ABC transporter complex. Responsible for energy coupling to the transport system. The chain is Putative ABC transporter ATP-binding protein BR1368/BS1330_I1363 from Brucella suis biovar 1 (strain 1330).